Consider the following 532-residue polypeptide: Polyadenylation factor subunit 2 (532 aa).

Residues 50 to 72 are disordered; sequence AGYQPRQQPQGEEDRRPAHRRTV. Residues 61 to 72 show a composition bias toward basic and acidic residues; it reads EEDRRPAHRRTV. 7 WD repeats span residues 143–182, 185–224, 227–266, 270–309, 312–353, 376–416, and 432–471; these read KVRH…FESI, AHES…VNVI, AHRE…NAES, GHGW…NVNT, GFKN…SGSS, GHDS…AGGA, and AHDY…DPTS. The interval 513 to 532 is disordered; that stretch reads NTAQPEVTDDEPVSIPGFAR.

The protein localises to the nucleus. Its function is as follows. Required for 3'-end cleavage and polyadenylation of pre-mRNAs. Also involved in chromosome segregation where it has a role in chromosome attachment to the mitotic spindle. The chain is Polyadenylation factor subunit 2 (PFS2) from Yarrowia lipolytica (strain CLIB 122 / E 150) (Yeast).